Reading from the N-terminus, the 331-residue chain is Biotin synthase (331 aa).

The 226-residue stretch at 52–277 (PEVEVEGIVS…RTILRYAGGR (226 aa)) folds into the Radical SAM core domain. The [4Fe-4S] cluster site is built by Cys-67, Cys-71, and Cys-74. 3 residues coordinate [2Fe-2S] cluster: Cys-110, Cys-202, and Arg-272.

Belongs to the radical SAM superfamily. Biotin synthase family. In terms of assembly, homodimer. The cofactor is [4Fe-4S] cluster. It depends on [2Fe-2S] cluster as a cofactor.

It carries out the reaction (4R,5S)-dethiobiotin + (sulfur carrier)-SH + 2 reduced [2Fe-2S]-[ferredoxin] + 2 S-adenosyl-L-methionine = (sulfur carrier)-H + biotin + 2 5'-deoxyadenosine + 2 L-methionine + 2 oxidized [2Fe-2S]-[ferredoxin]. It functions in the pathway cofactor biosynthesis; biotin biosynthesis; biotin from 7,8-diaminononanoate: step 2/2. Functionally, catalyzes the conversion of dethiobiotin (DTB) to biotin by the insertion of a sulfur atom into dethiobiotin via a radical-based mechanism. The polypeptide is Biotin synthase (Salinispora arenicola (strain CNS-205)).